Consider the following 394-residue polypeptide: MSKEKFERTKPHVNVGTIGHVDHGKTTLTAAITTVLAKHYGGAARAFDQIDNAPEEKARGITINTSHVEYDTPTRHYAHVDCPGHADYVKNMITGAAQMDGAILVVAATDGPMPQTREHILLGRQVGVPYIIVFLNKCDMVDDEELLELVEMEVRELLSQYDFPGDDTPIVRGSALQALNGVAEWEEKILELAGHLDTYIPEPERAIDQPFLLPIEDVFSISGRGTVVTGRVERGIIRTGDEVEIVGIKDTAKTTVTGVEMFRKLLDEGRAGENIGALLRGTKREEIERGQVLAKPGSITPHTDFESEVYVLSKDEGGRHTPFFKGYRPQFYFRTTDVTGTIELPEGVEMVMPGDNIKMTVSLIHPIAMDQGLRFAIREGGRTVGAGVVAKIIK.

The 195-residue stretch at 10-204 folds into the tr-type G domain; it reads KPHVNVGTIG…HLDTYIPEPE (195 aa). Residues 19-26 are G1; the sequence is GHVDHGKT. 19 to 26 is a binding site for GTP; sequence GHVDHGKT. Thr26 provides a ligand contact to Mg(2+). Positions 60-64 are G2; the sequence is GITIN. A G3 region spans residues 81-84; sequence DCPG. GTP-binding positions include 81–85 and 136–139; these read DCPGH and NKCD. A G4 region spans residues 136-139; that stretch reads NKCD. Positions 174-176 are G5; the sequence is SAL.

This sequence belongs to the TRAFAC class translation factor GTPase superfamily. Classic translation factor GTPase family. EF-Tu/EF-1A subfamily. As to quaternary structure, monomer.

The protein localises to the cytoplasm. The catalysed reaction is GTP + H2O = GDP + phosphate + H(+). Its function is as follows. GTP hydrolase that promotes the GTP-dependent binding of aminoacyl-tRNA to the A-site of ribosomes during protein biosynthesis. This chain is Elongation factor Tu 1, found in Haemophilus influenzae (strain 86-028NP).